The sequence spans 292 residues: GTP cyclohydrolase FolE2 (292 aa).

The protein belongs to the GTP cyclohydrolase IV family.

It catalyses the reaction GTP + H2O = 7,8-dihydroneopterin 3'-triphosphate + formate + H(+). It functions in the pathway cofactor biosynthesis; 7,8-dihydroneopterin triphosphate biosynthesis; 7,8-dihydroneopterin triphosphate from GTP: step 1/1. Converts GTP to 7,8-dihydroneopterin triphosphate. In Staphylococcus saprophyticus subsp. saprophyticus (strain ATCC 15305 / DSM 20229 / NCIMB 8711 / NCTC 7292 / S-41), this protein is GTP cyclohydrolase FolE2.